The chain runs to 281 residues: Octanoyl-[GcvH]:protein N-octanoyltransferase (281 aa).

The BPL/LPL catalytic domain maps to 44-250 (GESAATMRSW…TLQQFAPKLT (207 aa)). Residue C149 is the Acyl-thioester intermediate of the active site.

It belongs to the octanoyltransferase LipL family.

The catalysed reaction is N(6)-octanoyl-L-lysyl-[glycine-cleavage complex H protein] + L-lysyl-[lipoyl-carrier protein] = N(6)-octanoyl-L-lysyl-[lipoyl-carrier protein] + L-lysyl-[glycine-cleavage complex H protein]. Its pathway is protein modification; protein lipoylation via endogenous pathway; protein N(6)-(lipoyl)lysine from octanoyl-[acyl-carrier-protein]. Its function is as follows. Catalyzes the amidotransfer (transamidation) of the octanoyl moiety from octanoyl-GcvH to the lipoyl domain of the E2 subunit of lipoate-dependent enzymes. This is Octanoyl-[GcvH]:protein N-octanoyltransferase from Bacillus anthracis.